Reading from the N-terminus, the 417-residue chain is Tyrosine--tRNA ligase (417 aa).

Residue Tyr40 participates in L-tyrosine binding. A 'HIGH' region motif is present at residues 45 to 54 (ATAASLHVGH). 2 residues coordinate L-tyrosine: Tyr177 and Gln181. The 'KMSKS' region signature appears at 237–241 (KMGKS). Lys240 provides a ligand contact to ATP. Positions 351-414 (ISVVQLITRS…AGRKRHALIK (64 aa)) constitute an S4 RNA-binding domain.

This sequence belongs to the class-I aminoacyl-tRNA synthetase family. TyrS type 1 subfamily. As to quaternary structure, homodimer.

Its subcellular location is the cytoplasm. It carries out the reaction tRNA(Tyr) + L-tyrosine + ATP = L-tyrosyl-tRNA(Tyr) + AMP + diphosphate + H(+). Its function is as follows. Catalyzes the attachment of tyrosine to tRNA(Tyr) in a two-step reaction: tyrosine is first activated by ATP to form Tyr-AMP and then transferred to the acceptor end of tRNA(Tyr). This Dinoroseobacter shibae (strain DSM 16493 / NCIMB 14021 / DFL 12) protein is Tyrosine--tRNA ligase.